The following is a 226-amino-acid chain: Ribonuclease 3 (226 aa).

Residues 6–128 (INRLQRKLGY…LIGGIFLDSD (123 aa)) form the RNase III domain. Residue glutamate 41 coordinates Mg(2+). Residue aspartate 45 is part of the active site. Residues aspartate 114 and glutamate 117 each contribute to the Mg(2+) site. Glutamate 117 is an active-site residue. The region spanning 155-225 (DPKTRLQEFL…AEQALKQLEL (71 aa)) is the DRBM domain.

It belongs to the ribonuclease III family. Homodimer. Requires Mg(2+) as cofactor.

It localises to the cytoplasm. The enzyme catalyses Endonucleolytic cleavage to 5'-phosphomonoester.. Digests double-stranded RNA. Involved in the processing of primary rRNA transcript to yield the immediate precursors to the large and small rRNAs (23S and 16S). Processes some mRNAs, and tRNAs when they are encoded in the rRNA operon. Processes pre-crRNA and tracrRNA of type II CRISPR loci if present in the organism. This is Ribonuclease 3 from Edwardsiella ictaluri (strain 93-146).